Consider the following 294-residue polypeptide: Acetylglutamate kinase (294 aa).

Substrate-binding positions include 63 to 64 (GG), Arg-85, and Asn-188.

It belongs to the acetylglutamate kinase family. ArgB subfamily.

The protein resides in the cytoplasm. The enzyme catalyses N-acetyl-L-glutamate + ATP = N-acetyl-L-glutamyl 5-phosphate + ADP. It participates in amino-acid biosynthesis; L-arginine biosynthesis; N(2)-acetyl-L-ornithine from L-glutamate: step 2/4. Catalyzes the ATP-dependent phosphorylation of N-acetyl-L-glutamate. This is Acetylglutamate kinase from Methanococcus maripaludis (strain C7 / ATCC BAA-1331).